A 145-amino-acid polypeptide reads, in one-letter code: D-aminoacyl-tRNA deacylase (145 aa).

The Gly-cisPro motif, important for rejection of L-amino acids signature appears at 137–138 (GP).

The protein belongs to the DTD family. Homodimer.

It localises to the cytoplasm. The catalysed reaction is glycyl-tRNA(Ala) + H2O = tRNA(Ala) + glycine + H(+). It catalyses the reaction a D-aminoacyl-tRNA + H2O = a tRNA + a D-alpha-amino acid + H(+). Functionally, an aminoacyl-tRNA editing enzyme that deacylates mischarged D-aminoacyl-tRNAs. Also deacylates mischarged glycyl-tRNA(Ala), protecting cells against glycine mischarging by AlaRS. Acts via tRNA-based rather than protein-based catalysis; rejects L-amino acids rather than detecting D-amino acids in the active site. By recycling D-aminoacyl-tRNA to D-amino acids and free tRNA molecules, this enzyme counteracts the toxicity associated with the formation of D-aminoacyl-tRNA entities in vivo and helps enforce protein L-homochirality. The sequence is that of D-aminoacyl-tRNA deacylase from Sodalis glossinidius (strain morsitans).